Consider the following 185-residue polypeptide: Hypoxanthine/guanine phosphoribosyltransferase (185 aa).

The protein belongs to the purine/pyrimidine phosphoribosyltransferase family. Archaeal HPRT subfamily. In terms of assembly, homodimer.

The protein localises to the cytoplasm. The enzyme catalyses IMP + diphosphate = hypoxanthine + 5-phospho-alpha-D-ribose 1-diphosphate. It catalyses the reaction GMP + diphosphate = guanine + 5-phospho-alpha-D-ribose 1-diphosphate. Its pathway is purine metabolism; IMP biosynthesis via salvage pathway; IMP from hypoxanthine: step 1/1. Its function is as follows. Catalyzes a salvage reaction resulting in the formation of IMP that is energically less costly than de novo synthesis. In Methanococcus maripaludis (strain C6 / ATCC BAA-1332), this protein is Hypoxanthine/guanine phosphoribosyltransferase.